A 64-amino-acid polypeptide reads, in one-letter code: Relaxin (64 aa).

Disulfide bonds link C11–C51, C23–C64, and C50–C55.

Belongs to the insulin family. In terms of assembly, heterodimer of a B chain and an A chain linked by two disulfide bonds.

Its subcellular location is the secreted. This chain is Relaxin, found in Leucoraja erinaceus (Little skate).